Here is a 49-residue protein sequence, read N- to C-terminus: U6-myrmicitoxin-Mri1a (49 aa).

A signal peptide spans 1 to 27; it reads MNPKALCSFLLATFLLLTVTIMPSVHA. The propeptide occupies 28–35; it reads NAEANADA.

Post-translationally, contains 1 disulfide bond. In terms of tissue distribution, expressed by the venom gland.

The protein localises to the secreted. The chain is U6-myrmicitoxin-Mri1a from Manica rubida (European giant red ant).